The following is a 207-amino-acid chain: Holliday junction branch migration complex subunit RuvA (207 aa).

Residues 1–64 form a domain I region; that stretch reads MIGLISGQVQ…EDAQLLYGFI (64 aa). Positions 65 to 143 are domain II; the sequence is DRKERDVFRQ…NIEVDNSNLE (79 aa). The tract at residues 144–152 is flexible linker; the sequence is FAIQPAPIS. The segment at 153–207 is domain III; it reads AEDSIIAEVEGALMSLGYKEKEAQQAIKAAKSNGETFADTQSLLKATLQQFQSFK.

The protein belongs to the RuvA family. In terms of assembly, homotetramer. Forms an RuvA(8)-RuvB(12)-Holliday junction (HJ) complex. HJ DNA is sandwiched between 2 RuvA tetramers; dsDNA enters through RuvA and exits via RuvB. An RuvB hexamer assembles on each DNA strand where it exits the tetramer. Each RuvB hexamer is contacted by two RuvA subunits (via domain III) on 2 adjacent RuvB subunits; this complex drives branch migration. In the full resolvosome a probable DNA-RuvA(4)-RuvB(12)-RuvC(2) complex forms which resolves the HJ.

The protein resides in the cytoplasm. Functionally, the RuvA-RuvB-RuvC complex processes Holliday junction (HJ) DNA during genetic recombination and DNA repair, while the RuvA-RuvB complex plays an important role in the rescue of blocked DNA replication forks via replication fork reversal (RFR). RuvA specifically binds to HJ cruciform DNA, conferring on it an open structure. The RuvB hexamer acts as an ATP-dependent pump, pulling dsDNA into and through the RuvAB complex. HJ branch migration allows RuvC to scan DNA until it finds its consensus sequence, where it cleaves and resolves the cruciform DNA. In Psychrobacter arcticus (strain DSM 17307 / VKM B-2377 / 273-4), this protein is Holliday junction branch migration complex subunit RuvA.